A 122-amino-acid polypeptide reads, in one-letter code: Selenoprotein H (122 aa).

At Lys-20 the chain carries N6-acetyllysine. The segment at residues 41–44 is a cross-link (cysteinyl-selenocysteine (Cys-Sec); redox-active); the sequence is CTSU. A non-standard amino acid (selenocysteine) is located at residue Sec-44.

This sequence belongs to the SelWTH family.

May be involved in a redox-related process. This Homo sapiens (Human) protein is Selenoprotein H.